The sequence spans 393 residues: tRNA(Met) cytidine acetate ligase (393 aa).

Positions 81, 142, and 167 each coordinate ATP.

The protein belongs to the TmcAL family.

It is found in the cytoplasm. The enzyme catalyses cytidine(34) in elongator tRNA(Met) + acetate + ATP = N(4)-acetylcytidine(34) in elongator tRNA(Met) + AMP + diphosphate. Its function is as follows. Catalyzes the formation of N(4)-acetylcytidine (ac(4)C) at the wobble position of elongator tRNA(Met), using acetate and ATP as substrates. First activates an acetate ion to form acetyladenylate (Ac-AMP) and then transfers the acetyl group to tRNA to form ac(4)C34. The chain is tRNA(Met) cytidine acetate ligase from Bacillus mycoides (strain KBAB4) (Bacillus weihenstephanensis).